A 216-amino-acid polypeptide reads, in one-letter code: Imidazole glycerol phosphate synthase subunit HisH (216 aa).

One can recognise a Glutamine amidotransferase type-1 domain in the interval 2–216; that stretch reads RVAIIDYGSG…FIANFLKWKP (215 aa). The active-site Nucleophile is C88. Residues H196 and E198 contribute to the active site.

In terms of assembly, heterodimer of HisH and HisF.

It localises to the cytoplasm. The catalysed reaction is 5-[(5-phospho-1-deoxy-D-ribulos-1-ylimino)methylamino]-1-(5-phospho-beta-D-ribosyl)imidazole-4-carboxamide + L-glutamine = D-erythro-1-(imidazol-4-yl)glycerol 3-phosphate + 5-amino-1-(5-phospho-beta-D-ribosyl)imidazole-4-carboxamide + L-glutamate + H(+). It carries out the reaction L-glutamine + H2O = L-glutamate + NH4(+). Its pathway is amino-acid biosynthesis; L-histidine biosynthesis; L-histidine from 5-phospho-alpha-D-ribose 1-diphosphate: step 5/9. Functionally, IGPS catalyzes the conversion of PRFAR and glutamine to IGP, AICAR and glutamate. The HisH subunit catalyzes the hydrolysis of glutamine to glutamate and ammonia as part of the synthesis of IGP and AICAR. The resulting ammonia molecule is channeled to the active site of HisF. The protein is Imidazole glycerol phosphate synthase subunit HisH of Brucella melitensis biotype 1 (strain ATCC 23456 / CCUG 17765 / NCTC 10094 / 16M).